Reading from the N-terminus, the 1281-residue chain is Tubulin polyglutamylase TTLL5 (1281 aa).

Residues 62–407 (RYHLSYKIVR…VCQDPAQRAS (346 aa)) form the TTL domain. Residues Lys180, 186–187 (RG), 208–211 (SRYI), and 221–223 (KFD) each bind ATP. Arg186 is a binding site for a protein. Position 247 (Arg247) interacts with L-glutamate. 268-269 (TN) contacts ATP. L-glutamate contacts are provided by Tyr270, Ser271, and Lys293. The Mg(2+) site is built by Asp353, Glu366, and Asn368. The tract at residues 378–488 (PLDLKIKASM…RGGFIRIFPT (111 aa)) is c-MTBD region. Lys384 serves as a coordination point for L-glutamate. 3 disordered regions span residues 577 to 614 (MNVK…LREN), 1072 to 1114 (SASA…LQTG), and 1199 to 1281 (SSAT…HTKI). The segment covering 584 to 604 (ESEEEEEVALDNEDEEQEASQ) has biased composition (acidic residues). Composition is skewed to polar residues over residues 1086–1113 (SGPT…SLQT), 1199–1212 (SSAT…TTLP), 1240–1263 (ATSQ…SSLN), and 1270–1281 (ITSSTDPAHTKI).

Belongs to the tubulin--tyrosine ligase family. As to quaternary structure, interacts with the transcriptional coactivators NCOA1/SRC-1 and NCOA2/TIF2. It depends on Mg(2+) as a cofactor. In terms of tissue distribution, expressed in the retina, found in the rod and cone photoreceptors (at protein level). Widely expressed with highest levels in heart and skeletal muscle and low levels in other tissues.

It is found in the cell projection. The protein localises to the cilium. Its subcellular location is the cytoplasm. It localises to the cytoskeleton. The protein resides in the cilium basal body. It is found in the nucleus. It catalyses the reaction L-glutamyl-[protein] + L-glutamate + ATP = gamma-L-glutamyl-L-glutamyl-[protein] + ADP + phosphate + H(+). The catalysed reaction is (L-glutamyl)(n)-gamma-L-glutamyl-L-glutamyl-[protein] + L-glutamate + ATP = (L-glutamyl)(n+1)-gamma-L-glutamyl-L-glutamyl-[protein] + ADP + phosphate + H(+). Its function is as follows. Polyglutamylase which modifies tubulin, generating polyglutamate side chains on the gamma-carboxyl group of specific glutamate residues within the C-terminal tail of tubulin. Preferentially mediates ATP-dependent initiation step of the polyglutamylation reaction over the elongation step. Preferentially modifies the alpha-tubulin tail over a beta-tail. Required for CCSAP localization to both polyglutamylated spindle and cilia microtubules. Increases the effects of transcriptional coactivator NCOA2/TIF2 in glucocorticoid receptor-mediated repression and induction and in androgen receptor-mediated induction. The polypeptide is Tubulin polyglutamylase TTLL5 (Homo sapiens (Human)).